Here is a 129-residue protein sequence, read N- to C-terminus: Small ribosomal subunit protein uS11 (129 aa).

This sequence belongs to the universal ribosomal protein uS11 family. As to quaternary structure, part of the 30S ribosomal subunit. Interacts with proteins S7 and S18. Binds to IF-3.

In terms of biological role, located on the platform of the 30S subunit, it bridges several disparate RNA helices of the 16S rRNA. Forms part of the Shine-Dalgarno cleft in the 70S ribosome. The protein is Small ribosomal subunit protein uS11 of Haemophilus influenzae (strain ATCC 51907 / DSM 11121 / KW20 / Rd).